The chain runs to 101 residues: MAKKSKIERNKQRVALVKRYAAKREALLSTANDESLPMEDRFEARLKLAELPRNANPTRIRNRCAMTGRPRAYYRKLGISRVALRDLGSRGMIPGLVKSSW.

It belongs to the universal ribosomal protein uS14 family. As to quaternary structure, part of the 30S ribosomal subunit. Contacts proteins S3 and S10.

Binds 16S rRNA, required for the assembly of 30S particles and may also be responsible for determining the conformation of the 16S rRNA at the A site. This chain is Small ribosomal subunit protein uS14, found in Methylobacterium sp. (strain 4-46).